We begin with the raw amino-acid sequence, 122 residues long: MKPFLAIIFCFLILGVDSQRWFQFMKEAGQGSTDMWRAYSDMREANWKNSDKYFHARGNYDAAKRGPGGAWAAKVISDAREGIQRFTGRGAADSRADQFANKWGRSGKDPNHFRPAGLPSKY.

The N-terminal stretch at 1–18 is a signal peptide; that stretch reads MKPFLAIIFCFLILGVDS. Positions 100–122 are disordered; the sequence is ANKWGRSGKDPNHFRPAGLPSKY.

It belongs to the SAA family. In terms of tissue distribution, expressed by the liver; secreted in plasma.

It localises to the secreted. Functionally, major acute phase reactant. Apolipoprotein of the HDL complex. In vitro exhibits antimicrobial activity against Escherichia coli, Streptococcus uberis and Pseudomonas aeruginosa. The polypeptide is Serum amyloid A-3 protein (SAA3) (Mesocricetus auratus (Golden hamster)).